The primary structure comprises 106 residues: uncharacterized protein (106 aa).

The disordered stretch occupies residues 28-68 (SSANEPKKLPNKKLVSTKSHTQVNREKSKNKDTYEDYSDSN). Positions 50–61 (VNREKSKNKDTY) are enriched in basic and acidic residues.

This is an uncharacterized protein from Acanthamoeba polyphaga (Amoeba).